The chain runs to 237 residues: Pyrimidine 5'-nucleotidase PynA (237 aa).

Asp9 functions as the Nucleophile in the catalytic mechanism. Positions 9, 11, and 181 each coordinate Mg(2+). The active-site Proton donor is Asp11.

This sequence belongs to the HAD-like hydrolase superfamily. YjjG family. As to quaternary structure, homodimer. Mg(2+) is required as a cofactor. The cofactor is Mn(2+).

It localises to the cytoplasm. The enzyme catalyses a ribonucleoside 5'-phosphate + H2O = a ribonucleoside + phosphate. In terms of biological role, nucleotidase that shows high phosphatase activity toward non-canonical pyrimidine nucleotides and three canonical nucleoside 5'-monophosphates (UMP, dUMP and dTMP), and no activity against IMP, UDP, GMP, AMP, UTP or pNPP. Appears to function as a house-cleaning nucleotidase in vivo, since the general nucleotidase activity of it allows it to protect cells against non-canonical pyrimidine derivatives such as 5-fluoro-2'-deoxyuridine monophosphate (5-FdUMP), and prevents the incorporation of potentially mutagenic nucleotides such as 5-bromo-2'-deoxyuridine (5-BrdU) into DNA. Is strictly specific to pyrimidine substrates with 5'-monophosphates and shows no activity against nucleoside di- and triphosphates. This Streptococcus pneumoniae (strain ATCC BAA-255 / R6) protein is Pyrimidine 5'-nucleotidase PynA.